The following is a 560-amino-acid chain: Putative transport protein VSAL_I2029 (560 aa).

5 helical membrane-spanning segments follow: residues 14-34 (ILLL…KIGS), 37-57 (LGSS…GYTF), 66-86 (FMLF…GIFL), 94-114 (LLVL…GYYF), and 161-181 (NLSV…ILLA). 2 consecutive RCK C-terminal domains span residues 203–292 (RGIG…FRNG) and 293–376 (KEVF…KIGF). Helical transmembrane passes span 386–406 (LLAF…TMSF), 409–429 (VTFG…LGFL), 451–471 (GLLV…IEYF), 478–498 (VLAA…LVGA), and 539–559 (AGTY…MILL).

It belongs to the AAE transporter (TC 2.A.81) family. YbjL subfamily.

It localises to the cell membrane. This Aliivibrio salmonicida (strain LFI1238) (Vibrio salmonicida (strain LFI1238)) protein is Putative transport protein VSAL_I2029.